A 785-amino-acid polypeptide reads, in one-letter code: Cadherin-7 (785 aa).

Residues 1–27 (MKLGKVEFCHFLQLIALFLCFSGMSQA) form the signal peptide. Positions 28–47 (ELSRSRSKPYFQSGRSRTKR) are excised as a propeptide. Residues 28-607 (ELSRSRSKPY…AYVLPAGLST (580 aa)) are Extracellular-facing. Cadherin domains lie at 49–153 (WVWN…EPKF), 154–262 (LDGP…PPRF), 263–377 (PRRS…PPVF), 378–482 (SSPL…APEF), and 482–599 (FAMD…AEAY). Asparagine 449 and asparagine 530 each carry an N-linked (GlcNAc...) asparagine glycan. A helical transmembrane segment spans residues 608-628 (GALIAILACVLTLLVLILLIV). Residues 629–785 (TMRRRKKEPL…YGTGQESLYS (157 aa)) are Cytoplasmic-facing.

The protein resides in the cell membrane. Cadherins are calcium-dependent cell adhesion proteins. They preferentially interact with themselves in a homophilic manner in connecting cells; cadherins may thus contribute to the sorting of heterogeneous cell types. In Homo sapiens (Human), this protein is Cadherin-7 (CDH7).